Reading from the N-terminus, the 225-residue chain is MAEEPTYTAEQVNDVVHAGLGTVDFFLSRPVDGQSSLGKGSVPPGITAVLTNAAELKAKTAAAAPVKPKRKKIQHMTPAYTIADNGDPNRLPANTPIANPLIPIERPPGRMTDLDLATGTVTQGTYKGVELAKAGKNALLTRFSSGPSLTDQASSKDPNFKRGGEIDGRHKGRHRREWSIAWVGDEVKVYEWCNPTCAPVTATDRKFSCTCGTCPDRCGECEGDN.

Positions 145 to 157 (SGPSLTDQASSKD) are enriched in polar residues. Positions 145-172 (SGPSLTDQASSKDPNFKRGGEIDGRHKG) are disordered. Residues 158-169 (PNFKRGGEIDGR) are compositionally biased toward basic and acidic residues. Residues His-174, Cys-193, Cys-197, Cys-209, Cys-211, Cys-214, Cys-218, and Cys-221 each contribute to the Zn(2+) site.

The protein belongs to the paramyxoviruses V protein family.

Its subcellular location is the host cytoplasm. Plays an essential role in the inhibition of host immune response. Prevents the establishment of cellular antiviral state by blocking interferon-alpha/beta (IFN-alpha/beta) production and signaling pathway. Interacts with host IFIH1/MDA5 and DHX58/LGP2 to inhibit the transduction pathway involved in the activation of IFN-beta promoter, thus protecting the virus against cell antiviral state. Efficiently blocks type I and type II IFN signaling following infection, probably by targeting host STAT1 for proteasomal degradation. The chain is Non-structural protein V (P/V) from Simian virus 41 (SV41).